The chain runs to 304 residues: Aspartate carbamoyltransferase catalytic subunit (304 aa).

2 residues coordinate carbamoyl phosphate: Arg49 and Thr50. Lys77 lines the L-aspartate pocket. The carbamoyl phosphate site is built by Arg99, His127, and Gln130. 2 residues coordinate L-aspartate: Arg160 and Arg211. Ala252 and Pro253 together coordinate carbamoyl phosphate.

It belongs to the aspartate/ornithine carbamoyltransferase superfamily. ATCase family. Heterododecamer (2C3:3R2) of six catalytic PyrB chains organized as two trimers (C3), and six regulatory PyrI chains organized as three dimers (R2).

The enzyme catalyses carbamoyl phosphate + L-aspartate = N-carbamoyl-L-aspartate + phosphate + H(+). It participates in pyrimidine metabolism; UMP biosynthesis via de novo pathway; (S)-dihydroorotate from bicarbonate: step 2/3. Its function is as follows. Catalyzes the condensation of carbamoyl phosphate and aspartate to form carbamoyl aspartate and inorganic phosphate, the committed step in the de novo pyrimidine nucleotide biosynthesis pathway. The chain is Aspartate carbamoyltransferase catalytic subunit from Bacillus cytotoxicus (strain DSM 22905 / CIP 110041 / 391-98 / NVH 391-98).